The chain runs to 542 residues: ABC transport system permease protein p69 (542 aa).

Transmembrane regions (helical) follow at residues 23 to 43 (ALAI…FSGF), 77 to 97 (IFYV…FSYL), 114 to 134 (FTIF…NNLF), 140 to 160 (ATLT…TAFF), 212 to 232 (LSIA…GGTV), 236 to 256 (LVLI…ASVF), 287 to 307 (VMIY…LVQL), 350 to 370 (TQAI…GFLA), 386 to 406 (LLVI…PIIF), 412 to 432 (IIFV…TINF), 481 to 501 (LVVF…NFFE), and 509 to 529 (GTIT…LMAV). Residues 349-526 (TTQAISLITL…VYLMVFEVIL (178 aa)) form the ABC transmembrane type-1 domain.

This sequence belongs to the binding-protein-dependent transport system permease family.

The protein localises to the cell membrane. Functionally, probably part of a high-affinity transport system. In Mycoplasma pneumoniae (strain ATCC 29342 / M129 / Subtype 1) (Mycoplasmoides pneumoniae), this protein is ABC transport system permease protein p69 (p69).